The primary structure comprises 250 residues: DNA repair protein RecO (250 aa).

It belongs to the RecO family.

Involved in DNA repair and RecF pathway recombination. The chain is DNA repair protein RecO from Staphylococcus haemolyticus (strain JCSC1435).